The primary structure comprises 113 residues: Hemerythrin (113 aa).

Fe cation contacts are provided by His-25, His-54, Glu-58, His-73, His-77, His-101, and Asp-106.

Belongs to the hemerythrin family. As to quaternary structure, homotrimer.

Its function is as follows. Hemerythrin is a respiratory protein in blood cells of certain marine worms. The oxygen-binding site in each chain contains two iron atoms. The chain is Hemerythrin from Siphonosoma cumanense (Sipunculan worm).